The following is a 224-amino-acid chain: Uracil phosphoribosyltransferase (224 aa).

Arg92 provides a ligand contact to 5-phospho-alpha-D-ribose 1-diphosphate. GTP is bound at residue Lys109. Residues Arg117 and 145–153 (DPMLATGGT) contribute to the 5-phospho-alpha-D-ribose 1-diphosphate site. Residues Ile210 and 215 to 217 (GDA) contribute to the uracil site. Asp216 contacts 5-phospho-alpha-D-ribose 1-diphosphate.

Belongs to the UPRTase family. It depends on Mg(2+) as a cofactor.

The catalysed reaction is UMP + diphosphate = 5-phospho-alpha-D-ribose 1-diphosphate + uracil. It participates in pyrimidine metabolism; UMP biosynthesis via salvage pathway; UMP from uracil: step 1/1. Allosterically activated by GTP. Functionally, catalyzes the conversion of uracil and 5-phospho-alpha-D-ribose 1-diphosphate (PRPP) to UMP and diphosphate. The polypeptide is Uracil phosphoribosyltransferase (UPP) (Nicotiana tabacum (Common tobacco)).